A 271-amino-acid polypeptide reads, in one-letter code: Large ribosomal subunit protein uL2cz/uL2cy (271 aa).

Disordered stretches follow at residues Met1 to Val22 and Pro223 to Lys271.

The protein belongs to the universal ribosomal protein uL2 family. Part of the 50S ribosomal subunit.

It localises to the plastid. Its subcellular location is the chloroplast. This Sorghum bicolor (Sorghum) protein is Large ribosomal subunit protein uL2cz/uL2cy (rpl2-A).